The sequence spans 75 residues: UPF0270 protein PFLU_4323 (75 aa).

This sequence belongs to the UPF0270 family.

This chain is UPF0270 protein PFLU_4323, found in Pseudomonas fluorescens (strain SBW25).